The following is a 715-amino-acid chain: ATP-dependent DNA helicase Hel308 (715 aa).

The short motif at 1–29 (MKVGELNVSEKIKEILRERGIEELYPPQA) is the Q motif element. ATP-binding positions include Q28 and 46 to 53 (IPTASGKT). The Helicase ATP-binding domain occupies 33–197 (TSGVLEGENL…WLNAKLIRSD (165 aa)). The DEAH box motif lies at 145–148 (DEIH). A Helicase C-terminal domain is found at 226–422 (WEELVYDAVK…ILRSQILALI (197 aa)).

Belongs to the helicase family. Hel308 subfamily. In terms of assembly, monomer.

It catalyses the reaction Couples ATP hydrolysis with the unwinding of duplex DNA by translocating in the 3'-5' direction.. The catalysed reaction is ATP + H2O = ADP + phosphate + H(+). DNA-dependent ATPase and 3'-5' DNA helicase that may be involved in repair of stalled replication forks. Functionally, rapidly unwinds double-stranded (ds)DNA with a 3'-overhang, has no strand reannealing capabilities. Binds single-stranded (ss)DNA, dsDNA with a 3'-overhang and ssRNA. This Pyrococcus abyssi (strain GE5 / Orsay) protein is ATP-dependent DNA helicase Hel308.